Here is a 354-residue protein sequence, read N- to C-terminus: Guanine nucleotide-binding protein G(t) subunit alpha-3 (354 aa).

The segment at methionine 1–alanine 27 is disordered. The N-myristoyl glycine moiety is linked to residue glycine 2. The segment covering glutamate 8 to alanine 27 has biased composition (basic and acidic residues). The 323-residue stretch at arginine 32–phenylalanine 354 folds into the G-alpha domain. Positions lysine 35 to threonine 48 are G1 motif. Residues glycine 40–serine 47, leucine 175–threonine 181, aspartate 200–glutamine 204, asparagine 269–aspartate 272, and alanine 326 contribute to the GTP site. Mg(2+) contacts are provided by serine 47 and threonine 181. The tract at residues aspartate 173–threonine 181 is G2 motif. Positions phenylalanine 196–arginine 205 are G3 motif. The interval valine 265–aspartate 272 is G4 motif. The G5 motif stretch occupies residues threonine 324–threonine 329.

It belongs to the G-alpha family. G(i/o/t/z) subfamily. In terms of assembly, g proteins are composed of 3 units; alpha, beta and gamma, respectively GNAT3, GNB1 and GNG13 for Gustducin heterotrimer for bitter taste transduction. The alpha chain contains the guanine nucleotide binding site. Component of the TAS2R14-GNAT3 complex, consisting of TAS2R14, GNAT3, GNB1 and GNG2; within the complex interacts with TAS2R14; this complex plays a role in the perception of bitterness. Gustducin heterotrimer may also be composed of GNAT3, GNB3 and GNG13. Post-translationally, potential N-myristoylation may anchor alpha-subunit to the inner surface of plasma membrane. Expressed in taste buds (sensory organs of clustered epithelial cells) of the circumvallate, foliate and fungiform papillae of the tongue, as well as in nasoincisor, palatal and epiglottal taste buds at protein level. Expressed in enteroendocrine of the gut, in the lumenal pole of a subset of brush cells lining the stomach and the intestine at protein level. Detected in solitary cells throughout the respiratory track. Expressed also in spermatozoa.

It is found in the cytoplasm. Functionally, guanine nucleotide-binding protein (G protein) alpha subunit playing a prominent role in bitter and sweet taste transduction as well as in umami (monosodium glutamate, monopotassium glutamate, and inosine monophosphate) taste transduction. Transduction by this alpha subunit involves coupling of specific cell-surface receptors with a cGMP-phosphodiesterase; Activation of phosphodiesterase lowers intracellular levels of cAMP and cGMP which may open a cyclic nucleotide-suppressible cation channel leading to influx of calcium, ultimately leading to release of neurotransmitter. Indeed, denatonium and strychnine induce transient reduction in cAMP and cGMP in taste tissue, whereas this decrease is inhibited by GNAT3 antibody. Gustducin heterotrimer transduces response to bitter and sweet compounds via regulation of phosphodiesterase for alpha subunit, as well as via activation of phospholipase C for beta and gamma subunits, with ultimate increase inositol trisphosphate and increase of intracellular Calcium. GNAT3 can functionally couple to taste receptors to transmit intracellular signal: receptor heterodimer TAS1R2/TAS1R3 senses sweetness and TAS1R1/TAS1R3 transduces umami taste, whereas the T2R family GPCRs act as bitter sensors. Also functions as lumenal sugar sensors in the gut to control the expression of the Na+-glucose transporter SGLT1 in response to dietaty sugar, as well as the secretion of Glucagon-like peptide-1, GLP-1 and glucose-dependent insulinotropic polypeptide, GIP. Thus, may modulate the gut capacity to absorb sugars, with implications for the prevention and treatment of malabsorption syndromes and diet-related disorders including diabetes and obesity. In Rattus norvegicus (Rat), this protein is Guanine nucleotide-binding protein G(t) subunit alpha-3 (Gnat3).